We begin with the raw amino-acid sequence, 334 residues long: MKHKFLVSFLLGLTISFAGAQVIAKTPSVNNAPVARSVNQSPIQLEVIKSYQGHTLKGEAIIQIHYSQDGNYLLSTATDGLAKLWTADGELVREFAGKPVAMIFNGAFSRDGKAIITAGYNGVARIWDVQGNVLGEILGHTSAVTDVVFLSDDMGVVTSSDDGTIEGWSNIKEPLFTVTRPGVSRNMDFNAQTNLIAVTQDIGEITLLNPAGKVVRIIETDQGRLNDVDFSQDGKLLVTAGFDGTARVFNLDGQEILKIDVLDDGWVTGVAINQDNLIATVSDDGILRVWNLQGQLLGQYNPNLERLGSVSFHPNGKNLAIAAYHGTIILLELQ.

5 WD repeats span residues 56–86, 98–128, 139–169, 220–250, and 262–291; these read LKGE…KLWT, KPVA…RIWD, GHTS…EGWS, TDQG…RVFN, and LDDG…RVWN.

This is an uncharacterized protein from Synechocystis sp. (strain ATCC 27184 / PCC 6803 / Kazusa).